We begin with the raw amino-acid sequence, 363 residues long: LIM and cysteine-rich domains protein 1 (363 aa).

A Phosphoserine modification is found at Ser-16. The PET domain maps to 99–206; that stretch reads MIMTNPIATG…GEVALPGQGG (108 aa). The disordered stretch occupies residues 200-233; the sequence is ALPGQGGLPKEEGKQQEKPEGAETAAPTANGSLG. Residues 208 to 220 show a composition bias toward basic and acidic residues; the sequence is PKEEGKQQEKPEG. LIM zinc-binding domains are found at residues 239–304 and 305–363; these read YVCE…SLRP and RCSG…SKRT.

As to quaternary structure, interacts with beta-dystroglycan. Interacts with GATA1, GATA4 and GATA6. Highly expressed in both skeletal muscle and cardiac muscle.

The protein localises to the cytoplasm. It is found in the nucleus. Its function is as follows. Transcriptional cofactor that restricts GATA6 function by inhibiting DNA-binding, resulting in repression of GATA6 transcriptional activation of downstream target genes. Represses GATA6-mediated trans activation of lung- and cardiac tissue-specific promoters. Inhibits DNA-binding by GATA4 and GATA1 to the cTNC promoter. Plays a critical role in the development of cardiac hypertrophy via activation of calcineurin/nuclear factor of activated T-cells signaling pathway. In Sus scrofa (Pig), this protein is LIM and cysteine-rich domains protein 1 (LMCD1).